A 488-amino-acid polypeptide reads, in one-letter code: Teichuronic acid biosynthesis protein TuaE (488 aa).

The next 14 helical transmembrane spans lie at alanine 7 to histidine 29, methionine 35 to phenylalanine 57, phenylalanine 64 to leucine 86, leucine 91 to valine 110, leucine 122 to tryptophan 144, tyrosine 154 to glutamine 173, isoleucine 180 to threonine 202, proline 222 to isoleucine 244, alanine 257 to glycine 274, leucine 279 to leucine 298, isoleucine 303 to tyrosine 322, asparagine 354 to leucine 376, isoleucine 397 to valine 419, and leucine 459 to leucine 476.

It is found in the cell membrane. Its pathway is cell wall biogenesis; teichuronic acid biosynthesis. In terms of biological role, might be involved in the polymerization of teichuronic acid repeating units after their translocation to the outer surface of the membrane. This Bacillus subtilis (strain 168) protein is Teichuronic acid biosynthesis protein TuaE (tuaE).